Reading from the N-terminus, the 142-residue chain is Hemoglobin subunit alpha-1 (142 aa).

An N-acetylserine modification is found at S1. The Globin domain occupies 1-142 (SLSDKDKAAV…VALALAERYR (142 aa)). H59 lines the O2 pocket. Residue H88 participates in heme b binding.

Belongs to the globin family. Hb1 is a heterotetramer of two alpha-1 chains and two beta chains. HbC is a heterotetramer of two alpha-1 chains and two beta-C chains. As to expression, red blood cells.

Its function is as follows. Involved in oxygen transport from gills to the various peripheral tissues. The protein is Hemoglobin subunit alpha-1 (hba1) of Trematomus newnesi (Dusky notothen).